Consider the following 284-residue polypeptide: 2-dehydro-3-deoxyphosphooctonate aldolase (284 aa).

This sequence belongs to the KdsA family.

The protein localises to the cytoplasm. The enzyme catalyses D-arabinose 5-phosphate + phosphoenolpyruvate + H2O = 3-deoxy-alpha-D-manno-2-octulosonate-8-phosphate + phosphate. It functions in the pathway carbohydrate biosynthesis; 3-deoxy-D-manno-octulosonate biosynthesis; 3-deoxy-D-manno-octulosonate from D-ribulose 5-phosphate: step 2/3. The protein operates within bacterial outer membrane biogenesis; lipopolysaccharide biosynthesis. This chain is 2-dehydro-3-deoxyphosphooctonate aldolase, found in Histophilus somni (strain 129Pt) (Haemophilus somnus).